Consider the following 349-residue polypeptide: 2-oxoglutarate-Fe(II) type oxidoreductase ppzD (349 aa).

Residues 200–311 (NTSELRLNHY…RYSVAYFGKP (112 aa)) enclose the Fe2OG dioxygenase domain. Fe cation contacts are provided by H227, D229, and H287. R302 provides a ligand contact to 2-oxoglutarate.

This sequence belongs to the iron/ascorbate-dependent oxidoreductase family. The cofactor is Fe(2+).

It catalyses the reaction L-proline + 2-oxoglutarate + O2 = trans-4-hydroxy-L-proline + succinate + CO2. It carries out the reaction L-proline + 2-oxoglutarate + O2 = trans-3-hydroxy-L-proline + succinate + CO2. The catalysed reaction is D-proline + 2-oxoglutarate + O2 = cis-4-hydroxy-D-proline + succinate + CO2. It functions in the pathway secondary metabolite biosynthesis. Its function is as follows. 2-oxoglutarate-Fe(II) type oxidoreductase; part of the gene cluster that mediates the biosynthesis of pyrrolopyrazines, secondary metabolites showing insecticidal activity. Within the pathway, ppzD converts L-proline into trans-4-hydroxy-L-proline as a major product, yielding a key precursor for peramine biosynthesis. PpzD is also able to convert L-proline into trans-3-hydroxy-L-proline. The single multifunctional NRPS ppzA is sufficient to produce peramine via condensation of 1-pyrroline-5-carboxylate and arginine, N-methylation of the alpha-amino group of arginine and reduction of the thioester and the cyclization to form an iminium ion resulting in release from the peptide synthetase. Deprotonation of this intermediate and oxidation of the pyrroline ring would give rise to peramine. In Epichloe species that produce only peramine, the peramine synthetase gene is not localized in a gene cluster, in contrast to Metarhizium species that contain additional pyrrolopyrazine biosynthesis genes. The 2-oxoglutarate-Fe(II) type oxidoreductase ppzC hydroxylates peramine to yield the newly identified compound 8-hydroxyperamine whereas ppzD converts L-proline into trans-4-hydroxy-L-proline, a precursor of peramine biosynthesis. This is 2-oxoglutarate-Fe(II) type oxidoreductase ppzD (ppzD) from Metarhizium majus (strain ARSEF 297).